A 122-amino-acid polypeptide reads, in one-letter code: Holo-[acyl-carrier-protein] synthase (122 aa).

Residues aspartate 8 and glutamate 58 each contribute to the Mg(2+) site.

The protein belongs to the P-Pant transferase superfamily. AcpS family. It depends on Mg(2+) as a cofactor.

It localises to the cytoplasm. The catalysed reaction is apo-[ACP] + CoA = holo-[ACP] + adenosine 3',5'-bisphosphate + H(+). In terms of biological role, transfers the 4'-phosphopantetheine moiety from coenzyme A to a Ser of acyl-carrier-protein. This is Holo-[acyl-carrier-protein] synthase from Levilactobacillus brevis (strain ATCC 367 / BCRC 12310 / CIP 105137 / JCM 1170 / LMG 11437 / NCIMB 947 / NCTC 947) (Lactobacillus brevis).